We begin with the raw amino-acid sequence, 219 residues long: Elongation factor Ts (219 aa).

The involved in Mg(2+) ion dislocation from EF-Tu stretch occupies residues 82–85 (TDFV).

The protein belongs to the EF-Ts family.

The protein localises to the cytoplasm. Functionally, associates with the EF-Tu.GDP complex and induces the exchange of GDP to GTP. It remains bound to the aminoacyl-tRNA.EF-Tu.GTP complex up to the GTP hydrolysis stage on the ribosome. The polypeptide is Elongation factor Ts (Anaeromyxobacter dehalogenans (strain 2CP-C)).